Here is a 442-residue protein sequence, read N- to C-terminus: Protein translocase subunit SecY (442 aa).

10 helical membrane-spanning segments follow: residues leucine 29–isoleucine 49, isoleucine 69–isoleucine 89, tyrosine 126–proline 146, proline 153–isoleucine 173, isoleucine 182–leucine 202, isoleucine 217–valine 237, valine 274–alanine 294, valine 320–isoleucine 340, leucine 377–glutamine 397, and glycine 400–isoleucine 420.

Belongs to the SecY/SEC61-alpha family. As to quaternary structure, component of the Sec protein translocase complex. Heterotrimer consisting of SecY, SecE and SecG subunits. The heterotrimers can form oligomers, although 1 heterotrimer is thought to be able to translocate proteins. Interacts with the ribosome. Interacts with SecDF, and other proteins may be involved. Interacts with SecA.

It is found in the cell inner membrane. The protein resides in the cellular thylakoid membrane. In terms of biological role, the central subunit of the protein translocation channel SecYEG. Consists of two halves formed by TMs 1-5 and 6-10. These two domains form a lateral gate at the front which open onto the bilayer between TMs 2 and 7, and are clamped together by SecE at the back. The channel is closed by both a pore ring composed of hydrophobic SecY resides and a short helix (helix 2A) on the extracellular side of the membrane which forms a plug. The plug probably moves laterally to allow the channel to open. The ring and the pore may move independently. This is Protein translocase subunit SecY from Synechocystis sp. (strain ATCC 27184 / PCC 6803 / Kazusa).